The primary structure comprises 197 residues: MSFLKKSLLLILFLGLVSLSVCKEEKRETEEENENEENHEEGSEMKRYMFHLMDGEAKKRDSEENEIEENHEEGSEMKRYAFGYPSGEAKKIKRVSEEENENEENHEEGSEMKRYAFGYPSGEAKKIKRESEEEKEIEENHEEGSEMKRYAFGYPSGEAKKIKRESEEENENEENHEEGSEMKRYAFGYPSGEAKKM.

The first 20 residues, 1 to 20, serve as a signal peptide directing secretion; the sequence is MSFLKKSLLLILFLGLVSLS. The propeptide occupies 21-45; it reads VCKEEKRETEEENENEENHEEGSEM. Residues 24–197 are disordered; it reads EEKRETEEEN…GYPSGEAKKM (174 aa). Positions 30-39 are enriched in acidic residues; it reads EEENENEENH. Residues 40 to 62 are compositionally biased toward basic and acidic residues; the sequence is EEGSEMKRYMFHLMDGEAKKRDS. A D-methionine modification is found at M49. D54 carries the aspartic acid 1-amide modification. A propeptide spanning residues 56-77 is cleaved from the precursor; sequence EAKKRDSEENEIEENHEEGSEM. A81 is subject to D-alanine (Ala). Serine amide is present on S86. Residues 88 to 97 are compositionally biased toward basic and acidic residues; the sequence is EAKKIKRVSE. Residues 88–112 constitute a propeptide that is removed on maturation; it reads EAKKIKRVSEEENENEENHEEGSEM. A116 carries the post-translational modification D-alanine (Ala). S121 carries the serine amide modification. A compositionally biased stretch (basic and acidic residues) spans 123–132; that stretch reads EAKKIKRESE. Positions 123–147 are excised as a propeptide; that stretch reads EAKKIKRESEEEKEIEENHEEGSEM. A151 bears the D-alanine (Ala) mark. S156 is subject to Serine amide. A propeptide spanning residues 158 to 182 is cleaved from the precursor; sequence EAKKIKRESEEENENEENHEEGSEM. Residues 167–176 show a composition bias toward acidic residues; it reads EEENENEENH. A D-alanine (Ala) modification is found at A186. S191 carries the post-translational modification Serine amide. A propeptide spanning residues 193–197 is cleaved from the precursor; the sequence is EAKKM.

The protein belongs to the frog skin active peptide (FSAP) family. Dermorphin subfamily. Expressed by the skin glands.

Its subcellular location is the secreted. In terms of biological role, dermorphin has a very potent opiate-like activity. It has high affinity and selectivity for mu-type opioid receptors. Functionally, deltorphin has a very potent opiate-like activity. It has high affinity and selectivity for delta-type opioid receptors. This chain is Dermorphin-1, found in Phyllomedusa sauvagei (Sauvage's leaf frog).